A 278-amino-acid chain; its full sequence is Tyrosine-protein phosphatase pmp1 (278 aa).

A Tyrosine-protein phosphatase domain is found at 60–214 (GPVCIYPPNI…LSEYQQIIRK (155 aa)). C158 acts as the Phosphocysteine intermediate in catalysis. Residues 217 to 278 (SQGPYQSSSL…SSGSISNDAS (62 aa)) form a disordered region. A compositionally biased stretch (polar residues) spans 252–278 (SPSTSESSMFTNLRRTRSSGSISNDAS).

It belongs to the protein-tyrosine phosphatase family. Non-receptor class dual specificity subfamily.

The catalysed reaction is O-phospho-L-tyrosyl-[protein] + H2O = L-tyrosyl-[protein] + phosphate. Its function is as follows. Dual specificity phosphatase that dephosphorylates MAP kinase pmk1 on a Tyr. Has a role in chloride ion homeostasis by inactivating this pmk1 MAP kinase pathway. This is Tyrosine-protein phosphatase pmp1 (pmp1) from Schizosaccharomyces pombe (strain 972 / ATCC 24843) (Fission yeast).